A 269-amino-acid chain; its full sequence is MPDWLIAIVLGLVEGLTEFIPVSSTGHLLLTKIALGLTDPAWDTFIVLIQLGAVLGVVALYFQRLWAVVVGLPTQPEARRFALTVLIGCIPAFAAGLALHGVIKHFFENPYLPQVICVSLILGGVILLVVDKKAPPPREMDGMALSLKTAALIGLFQCLSLLPGVSRSGSTIVGSMLIGVDRKAAAEFSFFMAIPIMVGAFALDLLKSYKDIDASHAGAIAIGFVVSFLSGLVVVKFLIDFVGKRGFTPFAWWRIVVGVIGLGLIYIPR.

The next 7 helical transmembrane spans lie at 42-62, 83-103, 110-130, 142-162, 186-206, 219-239, and 247-267; these read WDTF…ALYF, LTVL…HGVI, PYLP…LLVV, GMAL…LSLL, AEFS…LDLL, AIAI…KFLI, and FTPF…LIYI.

This sequence belongs to the UppP family.

The protein localises to the cell inner membrane. The catalysed reaction is di-trans,octa-cis-undecaprenyl diphosphate + H2O = di-trans,octa-cis-undecaprenyl phosphate + phosphate + H(+). In terms of biological role, catalyzes the dephosphorylation of undecaprenyl diphosphate (UPP). Confers resistance to bacitracin. The sequence is that of Undecaprenyl-diphosphatase from Caulobacter sp. (strain K31).